Consider the following 143-residue polypeptide: Transcriptional regulator MraZ (143 aa).

SpoVT-AbrB domains lie at 5-47 (EYSH…PMAV) and 76-119 (ALEA…SAEN).

It belongs to the MraZ family. Forms oligomers.

The protein resides in the cytoplasm. The protein localises to the nucleoid. This Leuconostoc mesenteroides subsp. mesenteroides (strain ATCC 8293 / DSM 20343 / BCRC 11652 / CCM 1803 / JCM 6124 / NCDO 523 / NBRC 100496 / NCIMB 8023 / NCTC 12954 / NRRL B-1118 / 37Y) protein is Transcriptional regulator MraZ.